Reading from the N-terminus, the 70-residue chain is Putative membrane protein insertion efficiency factor (70 aa).

Belongs to the UPF0161 family.

It is found in the cell inner membrane. In terms of biological role, could be involved in insertion of integral membrane proteins into the membrane. In Geobacter sp. (strain M21), this protein is Putative membrane protein insertion efficiency factor.